We begin with the raw amino-acid sequence, 320 residues long: Dual oxidase maturation factor 2 (320 aa).

A helical membrane pass occupies residues Val22–Leu42. At Pro43–Trp51 the chain is on the cytoplasmic side. Residues Phe52–Phe72 traverse the membrane as a helical segment. Residues Ser73–Thr183 are Extracellular-facing. Residues Asn84, Asn109, and Asn121 are each glycosylated (N-linked (GlcNAc...) asparagine). Residues Leu184–Leu204 traverse the membrane as a helical segment. Over Tyr205–Gly206 the chain is Cytoplasmic. A helical transmembrane segment spans residues Gly207–Ile227. The Extracellular portion of the chain corresponds to Ser228–Ser249. The chain crosses the membrane as a helical span at residues Phe250 to Leu270. Residues His271–Leu320 are Cytoplasmic-facing.

This sequence belongs to the DUOXA family. In terms of assembly, heterodimer with DUXA2; disulfide-linked. Interacts with CSNK1G2. N-glycosylated.

It is found in the endoplasmic reticulum membrane. Functionally, required for the maturation and the transport from the endoplasmic reticulum to the plasma membrane of functional DUOX2. May play a role in thyroid hormone synthesis. The chain is Dual oxidase maturation factor 2 (Duoxa2) from Mus musculus (Mouse).